Consider the following 174-residue polypeptide: Crossover junction endodeoxyribonuclease RuvC (174 aa).

Catalysis depends on residues D8, E68, and D140. Mg(2+) is bound by residues D8, E68, and D140.

The protein belongs to the RuvC family. As to quaternary structure, homodimer which binds Holliday junction (HJ) DNA. The HJ becomes 2-fold symmetrical on binding to RuvC with unstacked arms; it has a different conformation from HJ DNA in complex with RuvA. In the full resolvosome a probable DNA-RuvA(4)-RuvB(12)-RuvC(2) complex forms which resolves the HJ. Mg(2+) is required as a cofactor.

Its subcellular location is the cytoplasm. The catalysed reaction is Endonucleolytic cleavage at a junction such as a reciprocal single-stranded crossover between two homologous DNA duplexes (Holliday junction).. The RuvA-RuvB-RuvC complex processes Holliday junction (HJ) DNA during genetic recombination and DNA repair. Endonuclease that resolves HJ intermediates. Cleaves cruciform DNA by making single-stranded nicks across the HJ at symmetrical positions within the homologous arms, yielding a 5'-phosphate and a 3'-hydroxyl group; requires a central core of homology in the junction. The consensus cleavage sequence is 5'-(A/T)TT(C/G)-3'. Cleavage occurs on the 3'-side of the TT dinucleotide at the point of strand exchange. HJ branch migration catalyzed by RuvA-RuvB allows RuvC to scan DNA until it finds its consensus sequence, where it cleaves and resolves the cruciform DNA. This is Crossover junction endodeoxyribonuclease RuvC from Legionella pneumophila (strain Corby).